The chain runs to 335 residues: MSKRKAPQETLNGGITDMLVELANFEKNVSQAIHKYNAYRKAASVIAKYPHKIKSGAEAKKLPGVGTKIAEKIDEFLATGKLRKLEKIRQDDTSSSINFLTRVTGIGPSAARKFVDEGIKTLEDLRKNEDKLNHHQRIGLKYFEDFEKRIPREEMLQMQDIVLNEIKKVDSEYIATVCGSFRRGAESSGDMDVLLTHPNFTSESSKQPKLLHRVVEQLQKVHFITDTLSKGETKFMGVCQLPSEKDGKEYPHRRIDIRLIPKDQYYCGVLYFTGSDIFNKNMRAHALEKGFTINEYTIRPLGVTGVAGEPLPVDSEQDIFDYIQWRYREPKDRSE.

Lys41 is covalently cross-linked (Glycyl lysine isopeptide (Lys-Gly) (interchain with G-Cter in ubiquitin)). Lys60 is a K(+) binding site. Residue Lys60 participates in Na(+) binding. A Glycyl lysine isopeptide (Lys-Gly) (interchain with G-Cter in ubiquitin) cross-link involves residue Lys61. 2 residues coordinate K(+): Leu62 and Val65. Residues Leu62 and Val65 each coordinate Na(+). The active-site Nucleophile; Schiff-base intermediate with DNA; for 5'-dRP lyase activity is the Lys72. Lys72 carries the N6-acetyllysine modification. Lys81 participates in a covalent cross-link: Glycyl lysine isopeptide (Lys-Gly) (interchain with G-Cter in ubiquitin). At Arg83 the chain carries Omega-N-methylarginine; by PRMT6. Thr101, Val103, and Ile106 together coordinate K(+). Residues Thr101, Val103, and Ile106 each contribute to the Na(+) site. An a 2'-deoxyribonucleoside 5'-triphosphate-binding site is contributed by Arg149. Arg152 carries the post-translational modification Omega-N-methylarginine; by PRMT6. A 2'-deoxyribonucleoside 5'-triphosphate contacts are provided by Ser180, Arg183, Gly189, and Asp190. The segment at 183-192 (RGAESSGDMD) is DNA-binding. Residues Asp190, Asp192, and Asp256 each coordinate Mg(2+).

This sequence belongs to the DNA polymerase type-X family. As to quaternary structure, monomer. Binds single-stranded DNA (ssDNA). Interacts with APEX1, LIG1, LIG3, FEN1, PCNA and XRCC1. Interacts with HUWE1/ARF-BP1, STUB1/CHIP and USP47. Interacts with FAM168A. Mg(2+) serves as cofactor. Post-translationally, methylation by PRMT6 stimulates the polymerase activity by enhancing DNA binding and processivity. Ubiquitinated at Lys-41, Lys-61 and Lys-81: monoubiquitinated by HUWE1/ARF-BP1. Monoubiquitinated protein is then the target of STUB1/CHIP, which catalyzes polyubiquitination from monoubiquitin, leading to degradation by the proteasome. USP47 mediates the deubiquitination of monoubiquitinated protein, preventing polyubiquitination by STUB1/CHIP and its subsequent degradation.

Its subcellular location is the nucleus. It localises to the cytoplasm. It carries out the reaction DNA(n) + a 2'-deoxyribonucleoside 5'-triphosphate = DNA(n+1) + diphosphate. The catalysed reaction is a 5'-end 2'-deoxyribose-2'-deoxyribonucleotide-DNA = (2E,4S)-4-hydroxypenten-2-al-5-phosphate + a 5'-end 5'-phospho-2'-deoxyribonucleoside-DNA + H(+). It catalyses the reaction 2'-deoxyribonucleotide-(2'-deoxyribose 5'-phosphate)-2'-deoxyribonucleotide-DNA = a 3'-end 2'-deoxyribonucleotide-(2,3-dehydro-2,3-deoxyribose 5'-phosphate)-DNA + a 5'-end 5'-phospho-2'-deoxyribonucleoside-DNA + H(+). Repair polymerase that plays a key role in base-excision repair. During this process, the damaged base is excised by specific DNA glycosylases, the DNA backbone is nicked at the abasic site by an apurinic/apyrimidic (AP) endonuclease, and POLB removes 5'-deoxyribose-phosphate from the preincised AP site acting as a 5'-deoxyribose-phosphate lyase (5'-dRP lyase); through its DNA polymerase activity, it adds one nucleotide to the 3' end of the arising single-nucleotide gap. Conducts 'gap-filling' DNA synthesis in a stepwise distributive fashion rather than in a processive fashion as for other DNA polymerases. It is also able to cleave sugar-phosphate bonds 3' to an intact AP site, acting as an AP lyase. This Mus musculus (Mouse) protein is DNA polymerase beta (Polb).